The chain runs to 208 residues: Imidazole glycerol phosphate synthase subunit HisH (208 aa).

Residues 1-206 (MIVIIDYDTG…KEVIRSCKSS (206 aa)) form the Glutamine amidotransferase type-1 domain. Cysteine 79 (nucleophile) is an active-site residue. Catalysis depends on residues histidine 181 and glutamate 183.

As to quaternary structure, heterodimer of HisH and HisF.

It localises to the cytoplasm. It catalyses the reaction 5-[(5-phospho-1-deoxy-D-ribulos-1-ylimino)methylamino]-1-(5-phospho-beta-D-ribosyl)imidazole-4-carboxamide + L-glutamine = D-erythro-1-(imidazol-4-yl)glycerol 3-phosphate + 5-amino-1-(5-phospho-beta-D-ribosyl)imidazole-4-carboxamide + L-glutamate + H(+). It carries out the reaction L-glutamine + H2O = L-glutamate + NH4(+). The protein operates within amino-acid biosynthesis; L-histidine biosynthesis; L-histidine from 5-phospho-alpha-D-ribose 1-diphosphate: step 5/9. Its function is as follows. IGPS catalyzes the conversion of PRFAR and glutamine to IGP, AICAR and glutamate. The HisH subunit catalyzes the hydrolysis of glutamine to glutamate and ammonia as part of the synthesis of IGP and AICAR. The resulting ammonia molecule is channeled to the active site of HisF. The protein is Imidazole glycerol phosphate synthase subunit HisH of Listeria welshimeri serovar 6b (strain ATCC 35897 / DSM 20650 / CCUG 15529 / CIP 8149 / NCTC 11857 / SLCC 5334 / V8).